Consider the following 103-residue polypeptide: MSFKSLLKNLPKFFFLGLIHIYRWTISPLLGSPCRFFPTCSQYALQALKHHGCIKGLGFTIKRIGKCGPWHPGGVDLVPMTTLEESLDISPATNDDDSCDSQA.

The protein belongs to the UPF0161 family.

The protein resides in the cell inner membrane. Functionally, could be involved in insertion of integral membrane proteins into the membrane. The sequence is that of Putative membrane protein insertion efficiency factor from Chlamydia felis (strain Fe/C-56) (Chlamydophila felis).